Consider the following 365-residue polypeptide: Peptide chain release factor 2 (365 aa).

The residue at position 252 (Gln-252) is an N5-methylglutamine.

It belongs to the prokaryotic/mitochondrial release factor family. Methylated by PrmC. Methylation increases the termination efficiency of RF2.

The protein resides in the cytoplasm. Functionally, peptide chain release factor 2 directs the termination of translation in response to the peptide chain termination codons UGA and UAA. The chain is Peptide chain release factor 2 from Escherichia coli O8 (strain IAI1).